Here is a 465-residue protein sequence, read N- to C-terminus: Hydroxyacid-oxoacid transhydrogenase, mitochondrial (465 aa).

The protein belongs to the iron-containing alcohol dehydrogenase family. Hydroxyacid-oxoacid transhydrogenase subfamily.

The protein resides in the mitochondrion. The enzyme catalyses (S)-3-hydroxybutanoate + 2-oxoglutarate = (R)-2-hydroxyglutarate + acetoacetate. It carries out the reaction 4-hydroxybutanoate + 2-oxoglutarate = (R)-2-hydroxyglutarate + succinate semialdehyde. Functionally, catalyzes the cofactor-independent reversible oxidation of gamma-hydroxybutyrate (GHB) to succinic semialdehyde (SSA) coupled to reduction of 2-ketoglutarate (2-KG) to D-2-hydroxyglutarate (D-2-HG). L-3-hydroxybutyrate (L-3-OHB) is also a substrate for HOT when using 2-KG as hydrogen acceptor, resulting in the formation of D-2-HG. The sequence is that of Hydroxyacid-oxoacid transhydrogenase, mitochondrial from Caenorhabditis briggsae.